Reading from the N-terminus, the 222-residue chain is Interleukin-12 subunit alpha (222 aa).

The signal sequence occupies residues 1–25 (MCPPRGLLLVTILVLLNHLDHLSLA). Cystine bridges form between C40–C113, C67–C199, and C88–C126. N42, N96, N110, and N183 each carry an N-linked (GlcNAc...) asparagine glycan.

This sequence belongs to the IL-6 superfamily. Heterodimer with IL12B; disulfide-linked. This heterodimer is known as interleukin IL-12. Heterodimer with EBI3/IL27B; not disulfide-linked. This heterodimer is known as interleukin IL-35. Interacts with NBR1; this interaction promotes IL-12 secretion.

Its subcellular location is the secreted. Its function is as follows. Heterodimerizes with IL12B to form the IL-12 cytokine or with EBI3/IL27B to form the IL-35 cytokine. IL-12 is primarily produced by professional antigen-presenting cells (APCs) such as B-cells and dendritic cells (DCs) as well as macrophages and granulocytes and regulates T-cell and natural killer-cell responses, induces the production of interferon-gamma (IFN-gamma), favors the differentiation of T-helper 1 (Th1) cells and is an important link between innate resistance and adaptive immunity. Mechanistically, exerts its biological effects through a receptor composed of IL12R1 and IL12R2 subunits. Binding to the receptor results in the rapid tyrosine phosphorylation of a number of cellular substrates including the JAK family kinases TYK2 and JAK2. In turn, recruited STAT4 gets phosphorylated and translocates to the nucleus where it regulates cytokine/growth factor responsive genes. As part of IL-35, plays essential roles in maintaining the immune homeostasis of the liver microenvironment and also functions as an immune-suppressive cytokine. Mediates biological events through unconventional receptors composed of IL12RB2 and gp130/IL6ST heterodimers or homodimers. Signaling requires the transcription factors STAT1 and STAT4, which form a unique heterodimer that binds to distinct DNA sites. In Felis catus (Cat), this protein is Interleukin-12 subunit alpha (IL12A).